A 417-amino-acid chain; its full sequence is UDP-N-acetylglucosamine 1-carboxyvinyltransferase (417 aa).

Phosphoenolpyruvate is bound at residue 22 to 23 (KN). Arginine 92 is a UDP-N-acetyl-alpha-D-glucosamine binding site. The Proton donor role is filled by cysteine 116. Cysteine 116 carries the 2-(S-cysteinyl)pyruvic acid O-phosphothioketal modification. UDP-N-acetyl-alpha-D-glucosamine contacts are provided by aspartate 304 and isoleucine 326.

It belongs to the EPSP synthase family. MurA subfamily.

The protein resides in the cytoplasm. The catalysed reaction is phosphoenolpyruvate + UDP-N-acetyl-alpha-D-glucosamine = UDP-N-acetyl-3-O-(1-carboxyvinyl)-alpha-D-glucosamine + phosphate. It functions in the pathway cell wall biogenesis; peptidoglycan biosynthesis. Cell wall formation. Adds enolpyruvyl to UDP-N-acetylglucosamine. The polypeptide is UDP-N-acetylglucosamine 1-carboxyvinyltransferase (Geobacter metallireducens (strain ATCC 53774 / DSM 7210 / GS-15)).